The chain runs to 355 residues: Peptide chain release factor 1 (355 aa).

Gln233 bears the N5-methylglutamine mark. The disordered stretch occupies residues 280-310; the sequence is ERRKKEQKRANNRRGQVGSGDRSERIRTYNF.

The protein belongs to the prokaryotic/mitochondrial release factor family. Post-translationally, methylated by PrmC. Methylation increases the termination efficiency of RF1.

It is found in the cytoplasm. Its function is as follows. Peptide chain release factor 1 directs the termination of translation in response to the peptide chain termination codons UAG and UAA. This is Peptide chain release factor 1 from Rickettsia canadensis (strain McKiel).